The following is a 151-amino-acid chain: Nucleoside diphosphate kinase (151 aa).

The ATP site is built by Lys-10, Phe-58, Arg-86, Thr-92, Arg-103, and Asn-113. His-116 functions as the Pros-phosphohistidine intermediate in the catalytic mechanism.

The protein belongs to the NDK family. In terms of assembly, homotetramer. Requires Mg(2+) as cofactor.

The protein resides in the cytoplasm. The catalysed reaction is dZDP + ATP = dZTP + ADP. It catalyses the reaction a 2'-deoxyribonucleoside 5'-diphosphate + ATP = a 2'-deoxyribonucleoside 5'-triphosphate + ADP. It carries out the reaction a ribonucleoside 5'-diphosphate + ATP = a ribonucleoside 5'-triphosphate + ADP. It participates in purine metabolism. Functionally, major role in the synthesis of nucleoside triphosphates other than ATP. The ATP gamma phosphate is transferred to the NDP beta phosphate via a ping-pong mechanism, using a phosphorylated active-site intermediate. (Microbial infection) Catalyzes the phosphorylation of dZDP to dZTP, when the bacterium is infected by a phage that produces the substrate for the synthesis of dZTP (2- amino-2'-deoxyadenosine 5'-triphosphate), which is then used by the phage as a DNA polymerase substrate. The polypeptide is Nucleoside diphosphate kinase (Synechococcus sp. (strain CC9902)).